The primary structure comprises 206 residues: Ribosomal RNA large subunit methyltransferase E (206 aa).

S-adenosyl-L-methionine-binding residues include Gly-60, Trp-62, Asp-80, Asp-96, and Asp-121. Lys-161 serves as the catalytic Proton acceptor.

The protein belongs to the class I-like SAM-binding methyltransferase superfamily. RNA methyltransferase RlmE family.

Its subcellular location is the cytoplasm. The enzyme catalyses uridine(2552) in 23S rRNA + S-adenosyl-L-methionine = 2'-O-methyluridine(2552) in 23S rRNA + S-adenosyl-L-homocysteine + H(+). Specifically methylates the uridine in position 2552 of 23S rRNA at the 2'-O position of the ribose in the fully assembled 50S ribosomal subunit. This chain is Ribosomal RNA large subunit methyltransferase E, found in Legionella pneumophila (strain Corby).